We begin with the raw amino-acid sequence, 165 residues long: UPF0254 protein MMP0935 (165 aa).

It belongs to the UPF0254 family.

The sequence is that of UPF0254 protein MMP0935 from Methanococcus maripaludis (strain DSM 14266 / JCM 13030 / NBRC 101832 / S2 / LL).